Reading from the N-terminus, the 151-residue chain is Transcriptional regulator MraZ (151 aa).

SpoVT-AbrB domains follow at residues 5–52 (ANAI…PLDE) and 81–124 (AVDL…DEDA).

Belongs to the MraZ family. In terms of assembly, forms oligomers.

It localises to the cytoplasm. The protein localises to the nucleoid. This Pseudomonas fluorescens (strain ATCC BAA-477 / NRRL B-23932 / Pf-5) protein is Transcriptional regulator MraZ.